The following is a 218-amino-acid chain: Protein GrpE (218 aa).

Residues 1–10 are compositionally biased toward polar residues; that stretch reads MSGEASTPAQ. Disordered regions lie at residues 1–44 and 198–218; these read MSGE…DPAE and SMGPGPSADAEGAASAEAEDS. The segment covering 200–218 has biased composition (low complexity); the sequence is GPGPSADAEGAASAEAEDS.

It belongs to the GrpE family. In terms of assembly, homodimer.

It localises to the cytoplasm. Participates actively in the response to hyperosmotic and heat shock by preventing the aggregation of stress-denatured proteins, in association with DnaK and GrpE. It is the nucleotide exchange factor for DnaK and may function as a thermosensor. Unfolded proteins bind initially to DnaJ; upon interaction with the DnaJ-bound protein, DnaK hydrolyzes its bound ATP, resulting in the formation of a stable complex. GrpE releases ADP from DnaK; ATP binding to DnaK triggers the release of the substrate protein, thus completing the reaction cycle. Several rounds of ATP-dependent interactions between DnaJ, DnaK and GrpE are required for fully efficient folding. The polypeptide is Protein GrpE (Parasynechococcus marenigrum (strain WH8102)).